Reading from the N-terminus, the 55-residue chain is ATP synthase F(0) complex subunit 8 (55 aa).

Residues 7-29 (NPWFYIMLMSWLTFSLIIQPELL) traverse the membrane as a helical segment.

This sequence belongs to the ATPase protein 8 family. As to quaternary structure, component of the ATP synthase complex composed at least of ATP5F1A/subunit alpha, ATP5F1B/subunit beta, ATP5MC1/subunit c (homooctomer), MT-ATP6/subunit a, MT-ATP8/subunit 8, ATP5ME/subunit e, ATP5MF/subunit f, ATP5MG/subunit g, ATP5MK/subunit k, ATP5MJ/subunit j, ATP5F1C/subunit gamma, ATP5F1D/subunit delta, ATP5F1E/subunit epsilon, ATP5PF/subunit F6, ATP5PB/subunit b, ATP5PD/subunit d, ATP5PO/subunit OSCP. ATP synthase complex consists of a soluble F(1) head domain (subunits alpha(3) and beta(3)) - the catalytic core - and a membrane F(0) domain - the membrane proton channel (subunits c, a, 8, e, f, g, k and j). These two domains are linked by a central stalk (subunits gamma, delta, and epsilon) rotating inside the F1 region and a stationary peripheral stalk (subunits F6, b, d, and OSCP).

It is found in the mitochondrion membrane. In terms of biological role, subunit 8, of the mitochondrial membrane ATP synthase complex (F(1)F(0) ATP synthase or Complex V) that produces ATP from ADP in the presence of a proton gradient across the membrane which is generated by electron transport complexes of the respiratory chain. ATP synthase complex consist of a soluble F(1) head domain - the catalytic core - and a membrane F(1) domain - the membrane proton channel. These two domains are linked by a central stalk rotating inside the F(1) region and a stationary peripheral stalk. During catalysis, ATP synthesis in the catalytic domain of F(1) is coupled via a rotary mechanism of the central stalk subunits to proton translocation. In vivo, can only synthesize ATP although its ATP hydrolase activity can be activated artificially in vitro. Part of the complex F(0) domain. This chain is ATP synthase F(0) complex subunit 8, found in Musophaga violacea (Violet turaco).